Here is a 95-residue protein sequence, read N- to C-terminus: Large ribosomal subunit protein uL23 (95 aa).

This sequence belongs to the universal ribosomal protein uL23 family. In terms of assembly, part of the 50S ribosomal subunit. Contacts protein L29, and trigger factor when it is bound to the ribosome.

In terms of biological role, one of the early assembly proteins it binds 23S rRNA. One of the proteins that surrounds the polypeptide exit tunnel on the outside of the ribosome. Forms the main docking site for trigger factor binding to the ribosome. In Deinococcus deserti (strain DSM 17065 / CIP 109153 / LMG 22923 / VCD115), this protein is Large ribosomal subunit protein uL23.